Reading from the N-terminus, the 353-residue chain is Protein Wnt-11b (353 aa).

An N-terminal signal peptide occupies residues 1–22 (MAPTRHWVTPLLLLCCSGICGA). Asn-31, Asn-38, and Asn-88 each carry an N-linked (GlcNAc...) asparagine glycan. Cystine bridges form between Cys-78-Cys-89, Cys-128-Cys-136, Cys-138-Cys-155, Cys-208-Cys-222, and Cys-210-Cys-217. Residue Ser-214 is the site of O-palmitoleoyl serine; by PORCN attachment. Sulfotyrosine occurs at positions 274 and 281. Intrachain disulfides connect Cys-282/Cys-313, Cys-298/Cys-308, Cys-312/Cys-352, Cys-328/Cys-343, Cys-330/Cys-340, and Cys-335/Cys-336. Asn-299 carries an N-linked (GlcNAc...) asparagine glycan.

It belongs to the Wnt family. In terms of assembly, homodimer. Secreted homodimers form a complex with wnt5a homodimers; tyrosine sulfation of both wnt11 and wnt5a by tpst1 is required for this interaction. Interacts with the transmembrane receptor fzd7/fz7. Interacts with lrp6 and ryk. Interacts with tdgf1/frl1. Interacts weakly with frzb1 and strongly with frzb2/crescent. Interaction with frzb2/crescent antagonizes wnt11 function in the neuroectoderm, but enhances it in mesodermal tissue. Post-translationally, glycosylation is required for protein secretion. In terms of processing, palmitoleoylation is required for efficient binding to frizzled receptors. Depalmitoleoylation leads to Wnt signaling pathway inhibition. As to expression, transcripts are expressed ubiquitously in early oocytes but become vegetally localized during mid-oogenesis then enriched on the dorsal side by the 8 to 16 cell stage. The protein becomes asymmetrically concentrated on the dorsal side by the 64-cell stage. During gastrulation, expressed in the lateral and ventral marginal zone, and during tadpole stages in the somites and first branchial arch. Weakly expressed in the pronephros from at least stage 12.5, with kidney expression increasing until stage 35. Expressed in the prospective posterior gut between stages 13 and 20, and in the deep foregut endoderm. Prior to neural crest cell migration, expressed in a domain flanking the neural crest on the lateral or epidermal side (the opposite side to wnt11/wnt11-r).

The protein localises to the secreted. Its subcellular location is the extracellular space. The protein resides in the extracellular matrix. In terms of biological role, ligand for the frizzled7 transmembrane receptor. Primarily acts via non-canonical Wnt pathways mediated by either Ca(2+) and PKC, or by JNK and dvl2/dsh. Depending on the cellular context, can also signal via the canonical Wnt pathway mediated by beta-catenin and dvl2/dsh. May also inhibit canonical Wnt signaling. Maternally initiates dorsal/ventral axis formation by a canonical route, which signals via lrp6. In a complex with wnt5a, activates the canonical and non-canonical processes involved in axis formation. In the non-canonical pathway, acts through fzd7/fz7 to induce phosphorylation of dvl2/dsh. Signals through a non-canonical Wnt pathway to regulate convergent extension movements during gastrulation. Interactions with the secreted Wnt antagonist sfrp5 to coordinate foregut development, acting via a non-canonical Wnt pathway whereby sfrp5 restricts wnt11b activity to prevent inappropriate foregut formation. Mediates cardiogenesis via non-canonical Wnt signaling involving JNK-activation and PKC. Acts redundantly with wnt11/wnt11r during pronephros induction. The protein is Protein Wnt-11b (wnt11b) of Xenopus laevis (African clawed frog).